A 97-amino-acid polypeptide reads, in one-letter code: Aspartyl/glutamyl-tRNA(Asn/Gln) amidotransferase subunit C (97 aa).

Belongs to the GatC family. Heterotrimer of A, B and C subunits.

It catalyses the reaction L-glutamyl-tRNA(Gln) + L-glutamine + ATP + H2O = L-glutaminyl-tRNA(Gln) + L-glutamate + ADP + phosphate + H(+). The enzyme catalyses L-aspartyl-tRNA(Asn) + L-glutamine + ATP + H2O = L-asparaginyl-tRNA(Asn) + L-glutamate + ADP + phosphate + 2 H(+). Its function is as follows. Allows the formation of correctly charged Asn-tRNA(Asn) or Gln-tRNA(Gln) through the transamidation of misacylated Asp-tRNA(Asn) or Glu-tRNA(Gln) in organisms which lack either or both of asparaginyl-tRNA or glutaminyl-tRNA synthetases. The reaction takes place in the presence of glutamine and ATP through an activated phospho-Asp-tRNA(Asn) or phospho-Glu-tRNA(Gln). In Prochlorococcus marinus (strain MIT 9515), this protein is Aspartyl/glutamyl-tRNA(Asn/Gln) amidotransferase subunit C.